Here is a 454-residue protein sequence, read N- to C-terminus: Aspartate aminotransferase P2, mitochondrial (454 aa).

A mitochondrion-targeting transit peptide spans Ser-1–Val-49. Residues Gly-86, Trp-182, and Asn-235 each coordinate L-aspartate. Residue Lys-299 is modified to N6-(pyridoxal phosphate)lysine. Arg-428 contacts L-aspartate.

Belongs to the class-I pyridoxal-phosphate-dependent aminotransferase family. As to quaternary structure, homodimer. Pyridoxal 5'-phosphate serves as cofactor.

The protein localises to the mitochondrion matrix. The enzyme catalyses L-aspartate + 2-oxoglutarate = oxaloacetate + L-glutamate. In terms of biological role, important for the metabolism of amino acids and Krebs-cycle related organic acids. In plants, it is involved in nitrogen metabolism and in aspects of carbon and energy metabolism. This Lupinus angustifolius (Narrow-leaved blue lupine) protein is Aspartate aminotransferase P2, mitochondrial.